We begin with the raw amino-acid sequence, 174 residues long: Large ribosomal subunit protein uL18 (174 aa).

This sequence belongs to the universal ribosomal protein uL18 family. As to quaternary structure, part of the 50S ribosomal subunit. Contacts the 5S and 23S rRNAs.

Its function is as follows. This is one of the proteins that bind and probably mediate the attachment of the 5S RNA into the large ribosomal subunit, where it forms part of the central protuberance. The polypeptide is Large ribosomal subunit protein uL18 (Methanosarcina barkeri (strain Fusaro / DSM 804)).